A 121-amino-acid polypeptide reads, in one-letter code: Small ribosomal subunit protein uS13 (121 aa).

Residues 94-121 (GLPLRGQRTRTNARTRKGPRKAGVALKK) form a disordered region.

Belongs to the universal ribosomal protein uS13 family. Part of the 30S ribosomal subunit. Forms a loose heterodimer with protein S19. Forms two bridges to the 50S subunit in the 70S ribosome.

Its function is as follows. Located at the top of the head of the 30S subunit, it contacts several helices of the 16S rRNA. In the 70S ribosome it contacts the 23S rRNA (bridge B1a) and protein L5 of the 50S subunit (bridge B1b), connecting the 2 subunits; these bridges are implicated in subunit movement. Contacts the tRNAs in the A and P-sites. This is Small ribosomal subunit protein uS13 from Ralstonia nicotianae (strain ATCC BAA-1114 / GMI1000) (Ralstonia solanacearum).